The following is a 143-amino-acid chain: Large ribosomal subunit protein uL15 (143 aa).

The segment at 1-51 is disordered; it reads MRLNSIAPAPGSRPSAKRVGRGIGSGLGKTAGRGHKGQKARAGGYHKVGFE. The span at 21-31 shows a compositional bias: gly residues; it reads RGIGSGLGKTA.

Belongs to the universal ribosomal protein uL15 family. In terms of assembly, part of the 50S ribosomal subunit.

Functionally, binds to the 23S rRNA. The protein is Large ribosomal subunit protein uL15 of Thioalkalivibrio sulfidiphilus (strain HL-EbGR7).